Consider the following 367-residue polypeptide: NAD(P)H-quinone oxidoreductase subunit 1, chloroplastic (367 aa).

8 helical membrane passes run 29–49 (WIPL…LVVV), 96–116 (VLLF…SYLI), 128–148 (INLG…GLLM), 176–196 (LALC…IDIV), 204–224 (ILGW…IAAL), 266–286 (LVSA…PIPI), 304–324 (VISA…FLFL), and 347–367 (FLLP…IALL).

Belongs to the complex I subunit 1 family. As to quaternary structure, NDH is composed of at least 16 different subunits, 5 of which are encoded in the nucleus.

It localises to the plastid. Its subcellular location is the chloroplast thylakoid membrane. The enzyme catalyses a plastoquinone + NADH + (n+1) H(+)(in) = a plastoquinol + NAD(+) + n H(+)(out). It catalyses the reaction a plastoquinone + NADPH + (n+1) H(+)(in) = a plastoquinol + NADP(+) + n H(+)(out). In terms of biological role, NDH shuttles electrons from NAD(P)H:plastoquinone, via FMN and iron-sulfur (Fe-S) centers, to quinones in the photosynthetic chain and possibly in a chloroplast respiratory chain. The immediate electron acceptor for the enzyme in this species is believed to be plastoquinone. Couples the redox reaction to proton translocation, and thus conserves the redox energy in a proton gradient. The protein is NAD(P)H-quinone oxidoreductase subunit 1, chloroplastic of Mesostigma viride (Green alga).